Reading from the N-terminus, the 371-residue chain is Aminomethyltransferase (371 aa).

It belongs to the GcvT family. As to quaternary structure, the glycine cleavage system is composed of four proteins: P, T, L and H.

It carries out the reaction N(6)-[(R)-S(8)-aminomethyldihydrolipoyl]-L-lysyl-[protein] + (6S)-5,6,7,8-tetrahydrofolate = N(6)-[(R)-dihydrolipoyl]-L-lysyl-[protein] + (6R)-5,10-methylene-5,6,7,8-tetrahydrofolate + NH4(+). In terms of biological role, the glycine cleavage system catalyzes the degradation of glycine. The sequence is that of Aminomethyltransferase from Oceanobacillus iheyensis (strain DSM 14371 / CIP 107618 / JCM 11309 / KCTC 3954 / HTE831).